A 538-amino-acid chain; its full sequence is Furcatin hydrolase (538 aa).

The transit peptide at 1 to 66 (MATITTLASS…NFNKDNWLAS (66 aa)) directs the protein to the chloroplast. Residues 18 to 37 (SFPGGSSRKPKKDNLSIKPP) are disordered. Residues Q88, H192, and 237-238 (NE) contribute to the a beta-D-glucoside site. E238 serves as the catalytic Proton donor. C257 and C260 are disulfide-bonded. A beta-D-glucoside-binding positions include Y376, E447, W494, 501–502 (EW), and F510. E447 functions as the Nucleophile in the catalytic mechanism.

This sequence belongs to the glycosyl hydrolase 1 family. As to expression, expressed in young and mature leaves, but not in fruit and stem.

It localises to the plastid. Its subcellular location is the chloroplast. The enzyme catalyses 7-[beta-D-apiofuranosyl-(1-&gt;6)-beta-D-glucopyranosyloxy]isoflavonoid + H2O = a 7-hydroxyisoflavonoid + beta-D-apiofuranosyl-(1-&gt;6)-D-glucose.. Disaccharide-specific acuminosidase, hydrolyzes the beta-glycosidic bond between p-allylphenol and acuminose with retention of anomeric configuration. Has highest activity towards furcatin, and lower activity towards beta-primeverosides and beta-vicianoside. Has very low activity towards beta-gentobiosides. In Viburnum furcatum (Scarlet leaved viburnum), this protein is Furcatin hydrolase.